The sequence spans 883 residues: Valine--tRNA ligase (883 aa).

The 'HIGH' region signature appears at 46 to 56 (PNVTGKLHLGH). The short motif at 520–524 (KMSKS) is the 'KMSKS' region element. Lys-523 lines the ATP pocket. A coiled-coil region spans residues 809 to 844 (LADLLNVEEELARLEKELAKWQKELDMVGKKLSNER).

It belongs to the class-I aminoacyl-tRNA synthetase family. ValS type 1 subfamily. In terms of assembly, monomer.

It is found in the cytoplasm. It catalyses the reaction tRNA(Val) + L-valine + ATP = L-valyl-tRNA(Val) + AMP + diphosphate. In terms of biological role, catalyzes the attachment of valine to tRNA(Val). As ValRS can inadvertently accommodate and process structurally similar amino acids such as threonine, to avoid such errors, it has a 'posttransfer' editing activity that hydrolyzes mischarged Thr-tRNA(Val) in a tRNA-dependent manner. In Streptococcus thermophilus (strain CNRZ 1066), this protein is Valine--tRNA ligase.